The chain runs to 183 residues: Small ribosomal subunit protein uS4c (183 aa).

In terms of domain architecture, S4 RNA-binding spans 82–143 (MRLDNILFRL…KQRSKALIQN (62 aa)).

This sequence belongs to the universal ribosomal protein uS4 family. In terms of assembly, part of the 30S ribosomal subunit. Contacts protein S5. The interaction surface between S4 and S5 is involved in control of translational fidelity.

The protein resides in the plastid. The protein localises to the chloroplast. Its function is as follows. One of the primary rRNA binding proteins, it binds directly to 16S rRNA where it nucleates assembly of the body of the 30S subunit. In terms of biological role, with S5 and S12 plays an important role in translational accuracy. The polypeptide is Small ribosomal subunit protein uS4c (rps4) (Babiana stricta (Baboon flower)).